Here is a 157-residue protein sequence, read N- to C-terminus: Endoribonuclease YbeY (157 aa).

Zn(2+) contacts are provided by His111, His115, and His121.

Belongs to the endoribonuclease YbeY family. The cofactor is Zn(2+).

The protein localises to the cytoplasm. Its function is as follows. Single strand-specific metallo-endoribonuclease involved in late-stage 70S ribosome quality control and in maturation of the 3' terminus of the 16S rRNA. This is Endoribonuclease YbeY from Pseudomonas putida (strain ATCC 47054 / DSM 6125 / CFBP 8728 / NCIMB 11950 / KT2440).